Consider the following 89-residue polypeptide: MKFSLATIALAAAVAASPTNPPAGAGNCNVKGKTGNVTCCNSAIPILGQLACNVLASGTCNSGQTAYCCDTGGNTGLINVIALNCVKLL.

The first 16 residues, methionine 1–alanine 16, serve as a signal peptide directing secretion. 4 disulfide bridges follow: cysteine 28–cysteine 68, cysteine 39–cysteine 60, cysteine 40–cysteine 52, and cysteine 69–cysteine 85. Residue asparagine 36 is glycosylated (N-linked (GlcNAc...) asparagine).

This sequence belongs to the fungal hydrophobin family.

It localises to the secreted. The protein localises to the cell wall. It is found in the vacuole. Its subcellular location is the cytoplasmic vesicle. Its function is as follows. Aerial growth, conidiation, and dispersal of filamentous fungi in the environment rely upon a capability of their secreting small amphipathic proteins called hydrophobins (HPBs) with low sequence identity. Class I can self-assemble into an outermost layer of rodlet bundles on aerial cell surfaces, conferring cellular hydrophobicity that supports fungal growth, development and dispersal; whereas Class II form highly ordered films at water-air interfaces through intermolecular interactions but contribute nothing to the rodlet structure. Hyd1C contributes to certain cell wall-related features, such as hydrophobicity but is not involved in cell wall-related events during fungal proliferation in host hemocoel. Does not contribute to conidial hydrophobicity. This chain is Class I hydrophobin C, found in Beauveria bassiana (strain ARSEF 2860) (White muscardine disease fungus).